The primary structure comprises 110 residues: MKNVLIHKGATYKTRSNRRRKVRTPSGKLVNRRVKKHSKKHRCHECNAILGSIARMRPAEFSRQKVSARRVNRPYGATTCGRCVREKIISAFLGNEERIVMEKTGAAAGG.

The disordered stretch occupies residues 1-41; that stretch reads MKNVLIHKGATYKTRSNRRRKVRTPSGKLVNRRVKKHSKKH. Residues 30–41 show a composition bias toward basic residues; the sequence is VNRRVKKHSKKH.

This sequence belongs to the eukaryotic ribosomal protein eL34 family.

In Encephalitozoon cuniculi (strain GB-M1) (Microsporidian parasite), this protein is Large ribosomal subunit protein eL34 (RPL34).